The primary structure comprises 564 residues: Potassium-transporting ATPase potassium-binding subunit (564 aa).

The next 10 helical transmembrane spans lie at tyrosine 4 to glycine 24, threonine 67 to leucine 87, leucine 135 to leucine 155, leucine 179 to proline 199, phenylalanine 258 to valine 278, alanine 286 to glutamate 306, alanine 382 to isoleucine 402, leucine 420 to alanine 440, leucine 487 to leucine 507, and glycine 533 to leucine 553.

It belongs to the KdpA family. As to quaternary structure, the system is composed of three essential subunits: KdpA, KdpB and KdpC.

Its subcellular location is the cell inner membrane. In terms of biological role, part of the high-affinity ATP-driven potassium transport (or Kdp) system, which catalyzes the hydrolysis of ATP coupled with the electrogenic transport of potassium into the cytoplasm. This subunit binds the periplasmic potassium ions and delivers the ions to the membrane domain of KdpB through an intramembrane tunnel. The sequence is that of Potassium-transporting ATPase potassium-binding subunit from Pseudomonas putida (strain ATCC 47054 / DSM 6125 / CFBP 8728 / NCIMB 11950 / KT2440).